The following is a 798-amino-acid chain: Gelsolin (798 aa).

The N-terminal stretch at 1 to 28 (MDASGAATMAVLSSLLVFLALSSSLCSA) is a signal peptide. The interval 57–181 (RVMHPSFANA…YEQGGVGTGF (125 aa)) is actin-severing. Residues 78–131 (ENFEPVIYPKTNYGKFYTGDSFIVLNTIENKKDKKLSWDVHFWLGLETSTDEAG) form a Gelsolin-like 1 repeat. Y90 carries the post-translational modification Phosphotyrosine; by SRC. Positions 128–131 (DEAG) are actin-actin interfilament contact point. Residues 167-174 (KNGIRYEQ) and 193-201 (RLFQVKGKR) contribute to the a 1,2-diacyl-sn-glycero-3-phospho-(1D-myo-inositol-4,5-bisphosphate) site. Gelsolin-like repeat units lie at residues 203 to 243 (VRVR…VEKL), 322 to 365 (LKVD…KEKT), 474 to 524 (IVVS…AARK), and 583 to 625 (VHAS…FEKQ). Positions 451–792 (MPDHGQNVIE…SYEDMKQLVI (342 aa)) are actin-binding, Ca-sensitive. D599 is a binding site for Ca(2+). At Y612 the chain carries Phosphotyrosine; by SRC. Residue E623 participates in Ca(2+) binding. Y662 is modified (phosphotyrosine; by SRC). The stretch at 689-730 (LKVEEVAQYEQEDLDSDDIMLLDAGDEIYLWVGYGVSEEENG) is one Gelsolin-like 6 repeat. The Ca(2+) site is built by D705, D706, and E728.

The protein belongs to the villin/gelsolin family. As to quaternary structure, binds to actin and to fibronectin. In terms of tissue distribution, isoform 1 and isoform 2 are ubiquitously expressed in early embryo. Isoform 1 is expressed in the fat body, and is abundant in hemolymph. Isoform 2 is expressed in parts of the gut.

Its subcellular location is the cytoplasm. It is found in the cytoskeleton. The protein resides in the secreted. In terms of biological role, calcium-regulated, actin-modulating protein that binds to the plus (or barbed) ends of actin monomers or filaments, preventing monomer exchange (end-blocking or capping). It can promote the assembly of monomers into filaments (nucleation) as well as sever filaments already formed. The polypeptide is Gelsolin (Gel) (Drosophila melanogaster (Fruit fly)).